An 882-amino-acid chain; its full sequence is Holliday junction resolvase MOC1, chloroplastic (882 aa).

2 disordered regions span residues 87 to 148 (IRDG…QTPT) and 323 to 351 (TPAAASQTPPTTVTSCGTGSGAPATPRAA). Over residues 91–111 (PNSNSRCSTVRTHATRSKSTG) the composition is skewed to polar residues. A compositionally biased stretch (low complexity) spans 112–125 (PSRATSSGPATAAP). The segment covering 134–148 (NDTQDGGLTSEQTPT) has biased composition (polar residues). Residues 323-337 (TPAAASQTPPTTVTS) show a composition bias toward low complexity. The Mg(2+) site is built by aspartate 397, glutamate 552, asparagine 629, and aspartate 634. The disordered stretch occupies residues 710–882 (KVERKAQARS…DGGVSGSESE (173 aa)). Positions 732–743 (EEPEAQAEEEQA) are enriched in acidic residues. Composition is skewed to low complexity over residues 744-758 (EAGTGVVAAAAGAAA), 769-783 (VESGSEAAVAEVAAG), 810-819 (SGKSSSKAEA), and 830-844 (ASVGSSSVGSSSVGS). 2 stretches are compositionally biased toward gly residues: residues 845–857 (SSGGGGGGGGGVK) and 868–882 (AKAGSDGGVSGSESE).

The cofactor is Mg(2+). It depends on Mn(2+) as a cofactor.

It is found in the plastid. Its subcellular location is the chloroplast. It catalyses the reaction Endonucleolytic cleavage at a junction such as a reciprocal single-stranded crossover between two homologous DNA duplexes (Holliday junction).. A structure-specific endonuclease that resolves Holliday junction (HJ) intermediates during genetic recombination. Cleaves 4-way DNA junctions introducing paired nicks in opposing strands, leaving a 5'-terminal phosphate and a 3'-terminal hydroxyl group that are ligated to produce recombinant products. Mediates chloroplast nucleoid segregation during chloroplast division. The sequence is that of Holliday junction resolvase MOC1, chloroplastic from Chlamydomonas reinhardtii (Chlamydomonas smithii).